The sequence spans 305 residues: Acetaldehyde dehydrogenase (305 aa).

Cys-130 (acyl-thioester intermediate) is an active-site residue. NAD(+) is bound by residues 161 to 169 and Asn-272; that span reads SVGPGTRKN.

This sequence belongs to the acetaldehyde dehydrogenase family.

It catalyses the reaction acetaldehyde + NAD(+) + CoA = acetyl-CoA + NADH + H(+). The chain is Acetaldehyde dehydrogenase from Leptothrix cholodnii (strain ATCC 51168 / LMG 8142 / SP-6) (Leptothrix discophora (strain SP-6)).